The primary structure comprises 198 residues: GTP-binding protein RHO1 (198 aa).

A GTP-binding site is contributed by 16-23; the sequence is GDGACGKT. The short motif at 38–46 is the Effector region element; sequence YVPTVFENY. Residues 63 to 67 and 121 to 124 each bind GTP; these read DTAGQ and CKSD. Cys195 carries the cysteine methyl ester modification. The S-geranylgeranyl cysteine moiety is linked to residue Cys195. The propeptide at 196-198 is removed in mature form; it reads VVL.

The protein belongs to the small GTPase superfamily. Rho family.

It localises to the cell membrane. This is GTP-binding protein RHO1 (RHO1) from Candida albicans (strain SC5314 / ATCC MYA-2876) (Yeast).